A 43-amino-acid chain; its full sequence is uncharacterized protein (43 aa).

The signal sequence occupies residues 1-17; sequence MYRRLLLNLFCMVFLQA.

This is an uncharacterized protein from Helicobacter pylori (strain J99 / ATCC 700824) (Campylobacter pylori J99).